Here is a 247-residue protein sequence, read N- to C-terminus: 2,3-bisphosphoglycerate-dependent phosphoglycerate mutase (247 aa).

Residues 8–15 (RHGQSLWN), 21–22 (TG), R60, 87–90 (ERHY), K98, 114–115 (RR), and 183–184 (GN) each bind substrate. Residue H9 is the Tele-phosphohistidine intermediate of the active site. E87 functions as the Proton donor/acceptor in the catalytic mechanism.

The protein belongs to the phosphoglycerate mutase family. BPG-dependent PGAM subfamily.

It carries out the reaction (2R)-2-phosphoglycerate = (2R)-3-phosphoglycerate. It participates in carbohydrate degradation; glycolysis; pyruvate from D-glyceraldehyde 3-phosphate: step 3/5. In terms of biological role, catalyzes the interconversion of 2-phosphoglycerate and 3-phosphoglycerate. In Hydrogenobaculum sp. (strain Y04AAS1), this protein is 2,3-bisphosphoglycerate-dependent phosphoglycerate mutase.